The primary structure comprises 130 residues: Small ribosomal subunit protein uS9 (130 aa).

The tract at residues 106-130 (RDSRKVERKKPGLKKARKASQFSKR) is disordered. Over residues 111 to 130 (VERKKPGLKKARKASQFSKR) the composition is skewed to basic residues.

It belongs to the universal ribosomal protein uS9 family.

The sequence is that of Small ribosomal subunit protein uS9 from Streptococcus pneumoniae serotype 2 (strain D39 / NCTC 7466).